The primary structure comprises 90 residues: Putative defensin-like protein 168 (90 aa).

The N-terminal stretch at 1 to 27 is a signal peptide; the sequence is MKYFTLFMISYIFISIFVFSHIHDVEA. 4 disulfides stabilise this stretch: cysteine 32–cysteine 90, cysteine 43–cysteine 66, cysteine 51–cysteine 84, and cysteine 64–cysteine 86.

This sequence belongs to the DEFL family.

Its subcellular location is the secreted. This chain is Putative defensin-like protein 168, found in Arabidopsis thaliana (Mouse-ear cress).